We begin with the raw amino-acid sequence, 481 residues long: tRNA-2-methylthio-N(6)-dimethylallyladenosine synthase (481 aa).

In terms of domain architecture, MTTase N-terminal spans 24–140; that stretch reads RKLFIESYGC…LPNLINEVEE (117 aa). Cysteine 33, cysteine 69, cysteine 103, cysteine 178, cysteine 182, and cysteine 185 together coordinate [4Fe-4S] cluster. A Radical SAM core domain is found at 164–410; that stretch reads QSNGVSAFVS…VDLQQKHSKQ (247 aa). Positions 413 to 476 constitute a TRAM domain; the sequence is NSVIGTTVEV…SATLIGEPIG (64 aa).

This sequence belongs to the methylthiotransferase family. MiaB subfamily. In terms of assembly, monomer. It depends on [4Fe-4S] cluster as a cofactor.

The protein localises to the cytoplasm. The catalysed reaction is N(6)-dimethylallyladenosine(37) in tRNA + (sulfur carrier)-SH + AH2 + 2 S-adenosyl-L-methionine = 2-methylsulfanyl-N(6)-dimethylallyladenosine(37) in tRNA + (sulfur carrier)-H + 5'-deoxyadenosine + L-methionine + A + S-adenosyl-L-homocysteine + 2 H(+). Catalyzes the methylthiolation of N6-(dimethylallyl)adenosine (i(6)A), leading to the formation of 2-methylthio-N6-(dimethylallyl)adenosine (ms(2)i(6)A) at position 37 in tRNAs that read codons beginning with uridine. This is tRNA-2-methylthio-N(6)-dimethylallyladenosine synthase from Christiangramia forsetii (strain DSM 17595 / CGMCC 1.15422 / KT0803) (Gramella forsetii).